Reading from the N-terminus, the 431-residue chain is Protein cereblon (431 aa).

Positions 1 to 36 (MGNQLQLLPENEEEEEDDMETEDRDGEDVEKPSIIN) are disordered. The segment covering 10–28 (ENEEEEEDDMETEDRDGED) has biased composition (acidic residues). The Lon N-terminal domain maps to 69 to 309 (LPVLPHVALI…CELDIMDRCT (241 aa)). The region spanning 308-416 (CTSLCCKQCQ…LTRSALLPTI (109 aa)) is the CULT domain. Zn(2+) is bound by residues Cys313 and Cys316. Residues His368, Trp370, and Trp376 each coordinate (S)-thalidomide. Zn(2+)-binding residues include Cys381 and Cys384.

It belongs to the CRBN family. As to quaternary structure, component of a DCX (DDB1-CUL4-X-box) protein ligase complex. In terms of tissue distribution, highly expressed in brain, head, vasculature otic vesicles and developing pectoral fins.

The protein localises to the cytoplasm. Its subcellular location is the nucleus. It participates in protein modification; protein ubiquitination. In terms of biological role, substrate recognition component of a DCX (DDB1-CUL4-X-box) E3 protein ligase complex that mediates the ubiquitination and subsequent proteasomal degradation of target proteins, such as MEIS2. Normal degradation of key regulatory proteins is required for normal limb outgrowth and expression of the fibroblast growth factor FGF8. Maintains presynaptic glutamate release and consequently cognitive functions, such as memory and learning, by negatively regulating large-conductance calcium-activated potassium (BK) channels in excitatory neurons. Likely to function by regulating the assembly and neuronal surface expression of BK channels via its interaction with KCNT1. May also be involved in regulating anxiety-like behaviors via a BK channel-independent mechanism. The polypeptide is Protein cereblon (crbn) (Danio rerio (Zebrafish)).